Here is a 132-residue protein sequence, read N- to C-terminus: Small ribosomal subunit protein uS8 (132 aa).

Belongs to the universal ribosomal protein uS8 family. In terms of assembly, part of the 30S ribosomal subunit. Contacts proteins S5 and S12.

In terms of biological role, one of the primary rRNA binding proteins, it binds directly to 16S rRNA central domain where it helps coordinate assembly of the platform of the 30S subunit. The protein is Small ribosomal subunit protein uS8 of Rhodospirillum rubrum (strain ATCC 11170 / ATH 1.1.1 / DSM 467 / LMG 4362 / NCIMB 8255 / S1).